Here is a 215-residue protein sequence, read N- to C-terminus: RxLR effector protein PITG_00582 (215 aa).

The first 19 residues, 1–19 (MLPYKTLLLALGFFFTVQC), serve as a signal peptide directing secretion. The short motif at 39-51 (RLLRSPEKTDEER) is the RxLR-dEER element. The stretch at 81–149 (VAKQAKEMSN…QNELEKLAKQ (69 aa)) forms a coiled coil.

Belongs to the RxLR effector family.

The protein resides in the secreted. The protein localises to the host cell membrane. Effector that might be involved in host plant infection. This Phytophthora infestans (strain T30-4) (Potato late blight agent) protein is RxLR effector protein PITG_00582.